A 67-amino-acid chain; its full sequence is Small ribosomal subunit protein eS27 (67 aa).

Zn(2+) is bound by residues cysteine 22, cysteine 25, cysteine 41, and cysteine 44. Residues 22–44 (CPDCGNEQVVFSHAAMVVRCLVC) form a C4-type zinc finger.

Belongs to the eukaryotic ribosomal protein eS27 family. As to quaternary structure, part of the 30S ribosomal subunit. Requires Zn(2+) as cofactor.

The polypeptide is Small ribosomal subunit protein eS27 (Pyrobaculum islandicum (strain DSM 4184 / JCM 9189 / GEO3)).